Here is a 535-residue protein sequence, read N- to C-terminus: Ribonuclease Y (535 aa).

The chain crosses the membrane as a helical span at residues I4–I24. Positions E118 to I141 are disordered. The 61-residue stretch at T225–L285 folds into the KH domain. The region spanning V351 to A444 is the HD domain.

This sequence belongs to the RNase Y family.

It localises to the cell membrane. Its function is as follows. Endoribonuclease that initiates mRNA decay. The chain is Ribonuclease Y from Streptococcus pyogenes serotype M1.